Here is a 412-residue protein sequence, read N- to C-terminus: MDPEAFSASLFKWDPRGAMPPPNRLLEAVAPPQPPPPPLPPPQPLPPAYSIRTRELGGLEEMFQAYGIRYYTAAKITELGFTVNTLLDMKDDELDDMMNSLSQIFRWELLVGERYGIKAAIRAERRRLEEEEGRRRHILSDGGTNVLDALSQEGLSEEPVQQQEREAAGSGGGGTAWEVVAPGGGRMRQRRRKKVVVGRERRGSSMEEDEDTEEGQEDNEDYNINNEGGGGISERQREHPFIVTEPGEVARGKKNGLDYLFHLYEQCRDFLIQVQNIAKERGEKCPTKVTNQVFRFAKKAGASYINKPKMRHYVHCYALHCLDEDASNALRRAFKERGENVGAWRQACYKPLVAIAARQGWDIDAIFNGHPRLSIWYVPTKLRQLCHSERSNAAAAASTSVSGGGVDHLPHF.

2 disordered regions span residues 1 to 47 (MDPE…PLPP) and 154 to 234 (GLSE…GISE). Over residues 31-47 (PPQPPPPPLPPPQPLPP) the composition is skewed to pro residues. A compositionally biased stretch (basic residues) spans 187 to 196 (MRQRRRKKVV). A compositionally biased stretch (acidic residues) spans 206–221 (MEEDEDTEEGQEDNED). 3 consecutive DNA-binding regions follow at residues 237 to 241 (REHPF), 306 to 313 (NKPKMRHY), and 377 to 380 (YVPT).

The protein belongs to the FLO/LFY family. In terms of tissue distribution, expressed in the floral meristem and also in the vegetative meristem.

It is found in the nucleus. Probable transcription factor required for the specification of floral meristem identity. The chain is Protein ALF (ALF) from Petunia hybrida (Petunia).